Reading from the N-terminus, the 139-residue chain is Gastrula zinc finger protein XlCGF29.1 (139 aa).

C2H2-type zinc fingers lie at residues 6–28, 34–56, 62–84, 90–112, and 117–139; these read FTCTECEESFSLKSRLIAHLLIH, FDSTKCGKGFRRNQYLKEHLSTH, FVCTVCGKTYKYKHGLNTHLHSH, FPCSECRKIFSSKASLDIHLRHH, and FPCTECDKTFKQKKNLKRHQMIH.

The protein belongs to the krueppel C2H2-type zinc-finger protein family.

Its subcellular location is the nucleus. In terms of biological role, may be involved in transcriptional regulation. This chain is Gastrula zinc finger protein XlCGF29.1, found in Xenopus laevis (African clawed frog).